Consider the following 131-residue polypeptide: uncharacterized protein (131 aa).

2 helical membrane-spanning segments follow: residues 61–81 and 102–122; these read LLLLPTIYIRSLVSYNVYLPI and VCSIASLFILVLFLFCFALRY.

The protein resides in the membrane. This is an uncharacterized protein from Saccharomyces cerevisiae (strain ATCC 204508 / S288c) (Baker's yeast).